The sequence spans 617 residues: Protein kinase STUNTED (617 aa).

Residues 162–187 (SSELSEGFSDKDLAKTTGQEKRKISG) are disordered. Residues 169 to 184 (FSDKDLAKTTGQEKRK) show a composition bias toward basic and acidic residues. The Protein kinase domain occupies 277–555 (FSLENLIGKG…RGEDDVSKWV (279 aa)). ATP-binding positions include 283 to 291 (IGKGGCNEV) and lysine 305. Tyrosine 350 is modified (phosphotyrosine). Aspartate 399 functions as the Proton acceptor in the catalytic mechanism. At serine 403 the chain carries Phosphoserine. Residue threonine 439 is modified to Phosphothreonine. Phosphotyrosine is present on tyrosine 447. A disordered region spans residues 590–617 (DSVSNSSLERSNNSLFSSSSSSSQELQS). Positions 591–617 (SVSNSSLERSNNSLFSSSSSSSQELQS) are enriched in low complexity.

It belongs to the protein kinase superfamily. Ser/Thr protein kinase family. In terms of tissue distribution, expressed ubiquitously, mostly in roots, to a lower extent in leaves, floral buds and stems, and, at low levels, in flowers and siliques.

It is found in the cytoplasm. Functionally, promotes cell proliferation in the gibberellic acid (GA) signaling pathway, acting downstream of RGA, and possibly through a negative regulation of two cyclin-dependent kinase inhibitors SIM and SMR1. This chain is Protein kinase STUNTED, found in Arabidopsis thaliana (Mouse-ear cress).